A 483-amino-acid polypeptide reads, in one-letter code: MKAFHTFCVVLLVFGSVSEAKFDDFEDEEDIVEYDDNDFAEFEDVMEDSVTESPQRVIITEDDEDETTVELEGQDENQEGDFEDADTQEGDTESEPYDDEEFEGYEDKPDTSSSKNKDPITIVDVPAHLQNSWESYYLEILMVTGLLAYIMNYIIGKNKNSRLAQAWFNTHRELLESNFTLVGDDGTNKEATSTGKLNQENEHIYNLWCSGRVCCEGMLIQLRFLKRQDLLNVLARMMRPVSDQVQIKVTMNDEDMETYVFAVGTRKALVRLQKEMQDLSEFCSDKPKSGAKYGLPDSLAILSEMGEVTDGMMDTKMVHFLTHYADKIESVHFSDQFSGPKIMQEEGQPLKLPDTKRTLLFTFNVPGSGNTYPKDMEALLPLMNMVIYSIDKAKKFRLNREGKQKADKNRARVEENFLKLTHVQRQEAAQSRREEKKRAEKERIMNEEDPEKQRRLEEAALRRDQKKLEKKQMKMKQIKVKAM.

The signal sequence occupies residues 1 to 20; that stretch reads MKAFHTFCVVLLVFGSVSEA. Topologically, residues 21–135 are cytoplasmic; the sequence is KFDDFEDEED…PAHLQNSWES (115 aa). The disordered stretch occupies residues 46 to 118; that stretch reads MEDSVTESPQ…PDTSSSKNKD (73 aa). The segment covering 60-104 has biased composition (acidic residues); it reads TEDDEDETTVELEGQDENQEGDFEDADTQEGDTESEPYDDEEFEG. The segment covering 105–118 has biased composition (basic and acidic residues); sequence YEDKPDTSSSKNKD. A helical membrane pass occupies residues 136–155; it reads YYLEILMVTGLLAYIMNYII. Residues 156–483 lie on the Lumenal side of the membrane; it reads GKNKNSRLAQ…KMKQIKVKAM (328 aa). The N-linked (GlcNAc...) asparagine glycan is linked to Asn-178. The tract at residues 424 to 483 is disordered; the sequence is QRQEAAQSRREEKKRAEKERIMNEEDPEKQRRLEEAALRRDQKKLEKKQMKMKQIKVKAM. Over residues 430 to 472 the composition is skewed to basic and acidic residues; the sequence is QSRREEKKRAEKERIMNEEDPEKQRRLEEAALRRDQKKLEKKQ. Positions 451-481 form a coiled coil; that stretch reads EKQRRLEEAALRRDQKKLEKKQMKMKQIKVK. Positions 473 to 483 are enriched in basic residues; that stretch reads MKMKQIKVKAM.

It belongs to the CCDC47 family. In terms of assembly, component of the PAT complex, composed of WDR83OS/Asterix and CCDC47. The PAT complex is part of the multi-pass translocon (MPT) complex, composed of three subcomplexes, the GEL complex (composed of RAB5IF/OPTI and TMCO1), the BOS complex (composed of NCLN/Nicalin, NOMO1 and TMEM147) and the PAT complex (composed of WDR83OS/Asterix and CCDC47). The MPT complex associates with the SEC61 complex. Interacts with VCP, HSPA5, DERL1, DERL2 and SELENOS.

It is found in the endoplasmic reticulum membrane. It localises to the rough endoplasmic reticulum membrane. Its function is as follows. Component of the multi-pass translocon (MPT) complex that mediates insertion of multi-pass membrane proteins into the lipid bilayer of membranes. The MPT complex takes over after the SEC61 complex: following membrane insertion of the first few transmembrane segments of proteins by the SEC61 complex, the MPT complex occludes the lateral gate of the SEC61 complex to promote insertion of subsequent transmembrane regions. Within the MPT complex, the PAT subcomplex sequesters any highly polar regions in the transmembrane domains away from the non-polar membrane environment until they can be buried in the interior of the fully assembled protein. Within the PAT subcomplex, CCDC47 occludes the lateral gate of the SEC61 complex. Involved in the regulation of calcium ion homeostasis in the ER. Required for proper protein degradation via the ERAD (ER-associated degradation) pathway. Has an essential role in the maintenance of ER organization during embryogenesis. This chain is PAT complex subunit CCDC47 (CCDC47), found in Pongo abelii (Sumatran orangutan).